The chain runs to 412 residues: L-cysteine:1D-myo-inositol 2-amino-2-deoxy-alpha-D-glucopyranoside ligase (412 aa).

Zn(2+) is bound at residue Cys-43. Residues 43-46 (CGIT), Thr-58, and 81-83 (NVT) contribute to the L-cysteinyl-5'-AMP site. The short motif at 45 to 55 (ITPYDATHLGH) is the 'HIGH' region element. Positions 187–192 (ERGGDP) match the 'ERGGDP' region motif. Trp-227 lines the L-cysteinyl-5'-AMP pocket. Zn(2+) is bound at residue Cys-231. Residue 249–251 (GSD) participates in L-cysteinyl-5'-AMP binding. His-256 contacts Zn(2+). Ile-283 contributes to the L-cysteinyl-5'-AMP binding site. A 'KMSKS' region motif is present at residues 289–293 (KMSKS).

Belongs to the class-I aminoacyl-tRNA synthetase family. MshC subfamily. Monomer. The cofactor is Zn(2+).

The enzyme catalyses 1D-myo-inositol 2-amino-2-deoxy-alpha-D-glucopyranoside + L-cysteine + ATP = 1D-myo-inositol 2-(L-cysteinylamino)-2-deoxy-alpha-D-glucopyranoside + AMP + diphosphate + H(+). Catalyzes the ATP-dependent condensation of GlcN-Ins and L-cysteine to form L-Cys-GlcN-Ins. The protein is L-cysteine:1D-myo-inositol 2-amino-2-deoxy-alpha-D-glucopyranoside ligase of Saccharopolyspora erythraea (strain ATCC 11635 / DSM 40517 / JCM 4748 / NBRC 13426 / NCIMB 8594 / NRRL 2338).